The primary structure comprises 176 residues: Ribosome rescue factor SmrB (176 aa).

The Smr domain occupies 93-168 (LDLHGYRQSE…GDAALLVLID (76 aa)).

It belongs to the SmrB family. In terms of assembly, associates with collided ribosomes, but not with correctly translating polysomes.

In terms of biological role, acts as a ribosome collision sensor. Detects stalled/collided disomes (pairs of ribosomes where the leading ribosome is stalled and a second ribosome has collided with it) and endonucleolytically cleaves mRNA at the 5' boundary of the stalled ribosome. Stalled/collided disomes form a new interface (primarily via the 30S subunits) that binds SmrB. Cleaved mRNA becomes available for tmRNA ligation, leading to ribosomal subunit dissociation and rescue of stalled ribosomes. This Shewanella oneidensis (strain ATCC 700550 / JCM 31522 / CIP 106686 / LMG 19005 / NCIMB 14063 / MR-1) protein is Ribosome rescue factor SmrB.